A 201-amino-acid polypeptide reads, in one-letter code: MSHDTNTIDSRTHEGELNKLGFWIFITAEFALFGTLFATLLTLQHGGDYAGKMTTELFELPLVLIMTFALLFSSYTCGIAIYYMRQEKQKLMMFWMIITLLLGLVFVGFEIYEFAHYASEGVNPTIGSYWSSFFILLGTHGCHVSLGIVWAICLLIQIQRRGLDKYNAPKLFIVSLYWHFLDVVWVFIFTAVYMIGMVYSG.

The next 5 helical transmembrane spans lie at 20–40, 62–82, 91–111, 133–153, and 172–192; these read LGFW…FATL, LVLI…IAIY, LMMF…GFEI, FFIL…WAIC, and FIVS…FTAV.

The protein belongs to the cytochrome c oxidase subunit 3 family.

The protein resides in the cell membrane. The enzyme catalyses 2 a quinol + O2 = 2 a quinone + 2 H2O. Functionally, catalyzes quinol oxidation with the concomitant reduction of oxygen to water. The polypeptide is Probable quinol oxidase subunit 3 (qoxC) (Staphylococcus aureus (strain MSSA476)).